Consider the following 171-residue polypeptide: MSLKQYSEEQLKEMALVEIAYEIFSEHKKPITFQELTDQVASLLGMGKEELEDRIAQFYTDLNIDGRFLALSDQTWGLRSWYPYDQLDEETQPTVKAKKKKAKKAVEEDLDLDEFEEIDEDDILLDDVEEDLDIDADEFDEIDEADDDELDDLEDEILDDDEDFDEEEDEE.

The HTH HARE-type domain maps to 14-81 (MALVEIAYEI…SDQTWGLRSW (68 aa)). Residues 138–171 (EFDEIDEADDDELDDLEDEILDDDEDFDEEEDEE) are disordered.

The protein belongs to the RpoE family. In terms of assembly, RNAP is composed of a core of 2 alpha, a beta and a beta' subunits. The core is associated with a delta subunit and one of several sigma factors.

In terms of biological role, participates in both the initiation and recycling phases of transcription. In the presence of the delta subunit, RNAP displays an increased specificity of transcription, a decreased affinity for nucleic acids, and an increased efficiency of RNA synthesis because of enhanced recycling. In Bacillus licheniformis (strain ATCC 14580 / DSM 13 / JCM 2505 / CCUG 7422 / NBRC 12200 / NCIMB 9375 / NCTC 10341 / NRRL NRS-1264 / Gibson 46), this protein is Probable DNA-directed RNA polymerase subunit delta.